Here is a 566-residue protein sequence, read N- to C-terminus: MEDSDSAAKQLGLAEAAAVAAAAAVAAAAAAAAESEAEEPVLSRDEDSEEDADSEAERETRRVTAVAVMAAESGHMDMGTEALPSPDEAAAAAAAFAEVTTVTVANVGSSADNVFTTSVANAASISGHVLSGRTALQIGDSLNTEKATLIVVHTDGSIVETTGLKGPAAPLTPGPQSPPTPLAPGQEKGGTKYNWDPSVYDSELPVRCRNISGTLYKSRLGSGGRGRCIKQGENWYSPTEFEAMAGRASSKDWKRSIRYAGRPLQCLIQDGILNPHAASCTCAACCDDMTLSGPVRLFVPYKRRKKENELPTTPVKKDSPKNITLLPATAATTFTVTPSGQITTSGALTFDRASTVEATAVISESPAQGDVFAGATVQEAGVQPPCRVGHPEPHYPGYQDSCQIAPFPEAALPTSHPKIVLTSLPALAVPPSTPTKAVSPTVVSGLEMSEHRSWLYLEEMVNSLLNTAQQLKTLFEQAKQASSCREAAVTQARMQVDTERKEQSCVNCGREAMSECTGCHKVNYCSTFCQRKDWKDHQHVCGQSASVTVQADDVHVEESVIEKVAV.

Disordered stretches follow at residues 33–62 and 163–191; these read AESE…ETRR and GLKG…KGGT. Over residues 170–182 the composition is skewed to pro residues; that stretch reads PLTPGPQSPPTPL. At Thr172 the chain carries Phosphothreonine. Ser177 is subject to Phosphoserine. Residue Thr180 is modified to Phosphothreonine. The 81-residue stretch at 194 to 274 folds into the SAND domain; the sequence is NWDPSVYDSE…QCLIQDGILN (81 aa). A Nuclear localization signal motif is present at residues 300–306; it reads PYKRRKK. The segment at 404–479 is interaction with LMO4; it reads IAPFPEAALP…QLKTLFEQAK (76 aa). Residue Thr433 is modified to Phosphothreonine. Ser444 and Ser449 each carry phosphoserine. Residues Cys505, Cys508, Cys516, Cys519, Cys525, Cys529, His537, and Cys541 each contribute to the Zn(2+) site. Residues 505 to 541 form an MYND-type zinc finger; the sequence is CVNCGREAMSECTGCHKVNYCSTFCQRKDWKDHQHVC.

In terms of assembly, homodimer. Isoform 1 and isoform 2 may form a heterodimer. May interact with the corepressors NCOR1 and NCRO2. Identified in a complex with XRCC5 and XRCC6. Interacts (via the SAND domain) with the DNA-PK complex subunit XRCC6; the interaction is direct with XRCC6 and may be inhibited by DNA-binding. Interacts with LMO4; LMO4 blocks export from nucleus. Interacts with LMO2 and CLIM2. In terms of processing, may be phosphorylated by DNA-PK complex in a DNA independent manner (in vitro). In terms of tissue distribution, ubiquitously expressed during embryogenesis, with higher expression in regions of the central nervous system, dorsal root ganglia, submandibular gland, epidermis and breast. In 12-week-old NOD mice, expression of isoform 2 is sevenfold higher in lymph node stromal elements than in T-cells and tenfold higher than in B-cells.

The protein resides in the nucleus. It localises to the cytoplasm. Transcription factor that binds to sequence with multiple copies of 5'-TTC[CG]G-3' present in its own promoter and that of the HNRPA2B1 gene. Down-regulates transcription of these genes. Binds to the retinoic acid response element (RARE) 5'-AGGGTTCACCGAAAGTTCA-3'. Activates the proenkephalin gene independently of promoter binding, probably through protein-protein interaction. Regulates epithelial cell proliferation and side-branching in the mammary gland. Required for neural tube closure and skeletal patterning. Controls the expression of peripheral tissue antigens in pancreatic lymph nodes. Isoform 1 displays greater transcriptional activity than isoform 2. Isoform 2 may inhibit transcriptional activity of isoform 1 by interacting with it and retaining it in the cytoplasm. Transcriptional activator of EIF4G3. May also involved in behavior. The sequence is that of Deformed epidermal autoregulatory factor 1 homolog (Deaf1) from Mus musculus (Mouse).